A 232-amino-acid polypeptide reads, in one-letter code: U2 small nuclear ribonucleoprotein B'' (232 aa).

The RRM 1 domain occupies 10 to 89 (QSIYIQNLNE…KPMRLQYAKA (80 aa)). Residues 100 to 157 (TFVPKDKKRKQEEKVERKREDSQRPNTANGPSANGPSANNGVPAPSFQPSGQETMPPN) are disordered. Over residues 108 to 122 (RKQEEKVERKREDSQ) the composition is skewed to basic and acidic residues. Polar residues-rich tracts occupy residues 123–139 (RPNT…SANN) and 146–156 (FQPSGQETMPP). One can recognise an RRM 2 domain in the interval 158-232 (NILFIQNLPH…NPMVISFAKK (75 aa)).

This sequence belongs to the RRM U1 A/B'' family. Component of the spliceosome where it is associated with snRNP U2.

The protein resides in the nucleus. Its subcellular location is the cajal body. It localises to the nucleoplasm. It is found in the cytoplasm. Involved in nuclear pre-mRNA splicing. In Arabidopsis thaliana (Mouse-ear cress), this protein is U2 small nuclear ribonucleoprotein B'' (U2B'').